Here is a 166-residue protein sequence, read N- to C-terminus: Crossover junction endodeoxyribonuclease RuvC (166 aa).

Catalysis depends on residues Asp-11, Glu-70, and Asp-142. Residues Asp-11, Glu-70, and Asp-142 each coordinate Mg(2+).

It belongs to the RuvC family. Homodimer which binds Holliday junction (HJ) DNA. The HJ becomes 2-fold symmetrical on binding to RuvC with unstacked arms; it has a different conformation from HJ DNA in complex with RuvA. In the full resolvosome a probable DNA-RuvA(4)-RuvB(12)-RuvC(2) complex forms which resolves the HJ. Mg(2+) is required as a cofactor.

It localises to the cytoplasm. It catalyses the reaction Endonucleolytic cleavage at a junction such as a reciprocal single-stranded crossover between two homologous DNA duplexes (Holliday junction).. The RuvA-RuvB-RuvC complex processes Holliday junction (HJ) DNA during genetic recombination and DNA repair. Endonuclease that resolves HJ intermediates. Cleaves cruciform DNA by making single-stranded nicks across the HJ at symmetrical positions within the homologous arms, yielding a 5'-phosphate and a 3'-hydroxyl group; requires a central core of homology in the junction. The consensus cleavage sequence is 5'-(A/T)TT(C/G)-3'. Cleavage occurs on the 3'-side of the TT dinucleotide at the point of strand exchange. HJ branch migration catalyzed by RuvA-RuvB allows RuvC to scan DNA until it finds its consensus sequence, where it cleaves and resolves the cruciform DNA. The chain is Crossover junction endodeoxyribonuclease RuvC from Nitratidesulfovibrio vulgaris (strain ATCC 29579 / DSM 644 / CCUG 34227 / NCIMB 8303 / VKM B-1760 / Hildenborough) (Desulfovibrio vulgaris).